A 220-amino-acid polypeptide reads, in one-letter code: Cell division protein SepF (220 aa).

Residues 1-120 are disordered; that stretch reads MAIKDAFNKM…RREQYQHAAH (120 aa). Basic and acidic residues predominate over residues 26–35; it reads LSSKKQEEPV. A compositionally biased stretch (low complexity) spans 39–79; the sequence is QQTSRPNQQQQAARASQPQQPKQARPQMQAQQRPQSQSRAA. Basic and acidic residues predominate over residues 93–102; it reads VSHDYNDRRA.

It belongs to the SepF family. Homodimer. Interacts with FtsZ.

Its subcellular location is the cytoplasm. Cell division protein that is part of the divisome complex and is recruited early to the Z-ring. Probably stimulates Z-ring formation, perhaps through the cross-linking of FtsZ protofilaments. Its function overlaps with FtsA. The chain is Cell division protein SepF from Streptococcus equi subsp. equi (strain 4047).